The chain runs to 441 residues: Serum response factor-binding protein 1 (441 aa).

Coiled-coil stretches lie at residues 52-77 (KGTE…AMKE) and 118-140 (LLKK…RQSA). Disordered stretches follow at residues 137-342 (RQSA…RNDK), 357-389 (FHSL…EPPV), and 406-441 (QTMQ…TFDD). Low complexity predominate over residues 139–152 (SAPAAESSESTSGE). Positions 153–183 (GRCKDIARSKDDARESQHPERTVVREQKAKD) are enriched in basic and acidic residues. Lysine 201 is covalently cross-linked (Glycyl lysine isopeptide (Lys-Gly) (interchain with G-Cter in SUMO2)). The residue at position 214 (serine 214) is a Phosphoserine. Residues 237–246 (DSNQGKASTK) are compositionally biased toward polar residues. Over residues 269–282 (EKEYFDDSTEERFY) the composition is skewed to basic and acidic residues. 3 positions are modified to phosphoserine: serine 276, serine 291, and serine 293. Over residues 308–321 (KESGVHSSAKELKP) the composition is skewed to basic and acidic residues. A Glycyl lysine isopeptide (Lys-Gly) (interchain with G-Cter in SUMO2) cross-link involves residue lysine 328. The span at 366–381 (SRRDPREQAPKNKAPD) shows a compositional bias: basic and acidic residues.

Interacts with SRF. Forms complexes with SRF and SRF cofactors ARID2, MYOCD and NKX2-5. Interacts with the N-terminus of SLC2A4. As to expression, highly expressed in heart, skeletal muscle, liver, kidney, testis and brain. Also expressed in white adipose tissue. Expression is up-regulated in cardiomyopathic heart.

Its subcellular location is the cytoplasm. It localises to the perinuclear region. In terms of biological role, may be involved in regulating transcriptional activation of cardiac genes during the aging process. May play a role in biosynthesis and/or processing of SLC2A4 in adipose cells. The sequence is that of Serum response factor-binding protein 1 from Mus musculus (Mouse).